Reading from the N-terminus, the 362-residue chain is Chorismate synthase (362 aa).

An NADP(+)-binding site is contributed by arginine 46. FMN is bound by residues arginine 122–serine 124, asparagine 238–alanine 239, glycine 278, lysine 293–serine 297, and arginine 319.

The protein belongs to the chorismate synthase family. In terms of assembly, homotetramer. It depends on FMNH2 as a cofactor.

It carries out the reaction 5-O-(1-carboxyvinyl)-3-phosphoshikimate = chorismate + phosphate. It functions in the pathway metabolic intermediate biosynthesis; chorismate biosynthesis; chorismate from D-erythrose 4-phosphate and phosphoenolpyruvate: step 7/7. Its function is as follows. Catalyzes the anti-1,4-elimination of the C-3 phosphate and the C-6 proR hydrogen from 5-enolpyruvylshikimate-3-phosphate (EPSP) to yield chorismate, which is the branch point compound that serves as the starting substrate for the three terminal pathways of aromatic amino acid biosynthesis. This reaction introduces a second double bond into the aromatic ring system. The polypeptide is Chorismate synthase (Campylobacter jejuni subsp. jejuni serotype O:2 (strain ATCC 700819 / NCTC 11168)).